A 361-amino-acid polypeptide reads, in one-letter code: MNLLTTKIDLDAIAHNTRVLKQMAGPAKLMAVVKANAYNHGVEKVAPVIAAHGADAFGVATLAEAMQLRDIGISQEVLCWIWTPEQDFRAAIDRNIDLAVISPAHAKALIDTDAEHIRVSIKIDSGLHRSGVDEQEWEGVFSALAAAPHIEVTGMFTHLACADEPENPETDRQIIAFRRALALARKHGLECPVNHVCNSPAFLTRSDLHMEMVRPGLAFYGLEPVAGREHGLKPAMTWEAKVSVVKQIEAGQGTSYGLTWRAEDRGFVAVVPAGYADGMPRHAQGKFSVTIDGVDYPQVGRVCMDQFVISLGDNPHGVEAGAKAVIFGENGHDATDFAERLDTINYEVVCRPTGRTVRAYV.

Lysine 34 (proton acceptor; specific for D-alanine) is an active-site residue. Residue lysine 34 is modified to N6-(pyridoxal phosphate)lysine. Arginine 129 serves as a coordination point for substrate. Catalysis depends on tyrosine 256, which acts as the Proton acceptor; specific for L-alanine. Position 304 (methionine 304) interacts with substrate.

Belongs to the alanine racemase family. Pyridoxal 5'-phosphate serves as cofactor.

The catalysed reaction is L-alanine = D-alanine. The protein operates within amino-acid biosynthesis; D-alanine biosynthesis; D-alanine from L-alanine: step 1/1. Catalyzes the interconversion of L-alanine and D-alanine. May also act on other amino acids. This is Alanine racemase (alr) from Corynebacterium glutamicum (strain R).